The sequence spans 391 residues: Probable sugar efflux transporter (391 aa).

12 helical membrane-spanning segments follow: residues Val16–Leu36, Val51–Leu71, Leu82–Phe102, Met110–Val130, Gln138–Gly158, Thr170–Pro190, Pro210–Tyr230, Ile247–Ser267, Phe277–Asn297, Trp300–Leu320, Ile338–Ile358, and Leu361–Leu381.

The protein belongs to the major facilitator superfamily. SotB (TC 2.A.1.2) family.

It localises to the cell inner membrane. In terms of biological role, involved in the efflux of sugars. The physiological role may be the reduction of the intracellular concentration of toxic sugars or sugar metabolites. This chain is Probable sugar efflux transporter, found in Helicobacter pylori (strain HPAG1).